The following is a 59-amino-acid chain: Movement protein TGBp3 (59 aa).

The Lumenal portion of the chain corresponds to 1–3 (MHL). A helical membrane pass occupies residues 4-21 (AIVGALTLVLTLFVLHYT). Residues 22–59 (TKDDRCYILINGHSAFTNCPASPDLAKVISQLKPHNHG) lie on the Cytoplasmic side of the membrane.

The protein belongs to the Tymovirales TGBp3 protein family.

The protein resides in the host endoplasmic reticulum membrane. In terms of biological role, plays a role in viral cell-to-cell propagation, by facilitating genome transport to neighboring plant cells through plasmosdesmata. May induce the formation of granular vesicles derived from the Endoplasmic reticulum, which align on actin filaments. The polypeptide is Movement protein TGBp3 (Chenopodium album (Fat hen)).